The chain runs to 196 residues: MEKFTIYTGTTVPLMNDNIDTDQILPKQFLKLIDKKGFGKYLMYSWRYKDNKYTEDPDFVFNRPEYRKATILITGDNFGAGSSREHAAWALADYGFKVVIAGSFGDIHYNNELNNGMLPIVQPIEVRRKLEQLKPTDEVTVDLEQQKIISPVGEFTFEIDGEWKHKLLNGLDDIGITMQYEDLITEYEKHRPSYWQ.

The protein belongs to the LeuD family. LeuD type 1 subfamily. As to quaternary structure, heterodimer of LeuC and LeuD.

It carries out the reaction (2R,3S)-3-isopropylmalate = (2S)-2-isopropylmalate. It functions in the pathway amino-acid biosynthesis; L-leucine biosynthesis; L-leucine from 3-methyl-2-oxobutanoate: step 2/4. Its function is as follows. Catalyzes the isomerization between 2-isopropylmalate and 3-isopropylmalate, via the formation of 2-isopropylmaleate. This is 3-isopropylmalate dehydratase small subunit from Streptococcus thermophilus (strain CNRZ 1066).